Consider the following 454-residue polypeptide: UDP-N-acetylmuramoylalanine--D-glutamate ligase (454 aa).

115-121 is a binding site for ATP; that stretch reads GTNGKTT.

The protein belongs to the MurCDEF family.

Its subcellular location is the cytoplasm. The catalysed reaction is UDP-N-acetyl-alpha-D-muramoyl-L-alanine + D-glutamate + ATP = UDP-N-acetyl-alpha-D-muramoyl-L-alanyl-D-glutamate + ADP + phosphate + H(+). Its pathway is cell wall biogenesis; peptidoglycan biosynthesis. In terms of biological role, cell wall formation. Catalyzes the addition of glutamate to the nucleotide precursor UDP-N-acetylmuramoyl-L-alanine (UMA). This chain is UDP-N-acetylmuramoylalanine--D-glutamate ligase, found in Thermoanaerobacter sp. (strain X514).